We begin with the raw amino-acid sequence, 162 residues long: Regulator of sigma D (162 aa).

It belongs to the Rsd/AlgQ family. As to quaternary structure, interacts with RpoD.

It localises to the cytoplasm. Binds RpoD and negatively regulates RpoD-mediated transcription activation by preventing the interaction between the primary sigma factor RpoD with the catalytic core of the RNA polymerase and with promoter DNA. May be involved in replacement of the RNA polymerase sigma subunit from RpoD to RpoS during the transition from exponential growth to the stationary phase. This is Regulator of sigma D from Salmonella agona (strain SL483).